Here is a 482-residue protein sequence, read N- to C-terminus: Zinc finger CCCH domain-containing protein 40 (482 aa).

Residues 157-184 (RNRAHVCSFYVRGECTRGAECPYRHEMP) form a C3H1-type zinc finger. The 74-residue stretch at 228–301 (RTLYIGGLNN…IRLKLMWGKP (74 aa)) folds into the RRM domain. 2 stretches are compositionally biased toward low complexity: residues 329–347 (SQQQSGDQPQPPGMEGQQQ) and 389–428 (PGPQQAAQAQASSSSGQSYPMPPQYYHGQYPPYYPPYGGY). The interval 329 to 482 (SQQQSGDQPQ…VPPPQQTTQN (154 aa)) is disordered. Over residues 429-446 (MPPPRMPYPPPPQYPPYQ) the composition is skewed to pro residues. The span at 452 to 466 (PAQSQASSSQQPAPA) shows a compositional bias: low complexity. Positions 473-482 (VPPPQQTTQN) are enriched in pro residues.

In Oryza sativa subsp. japonica (Rice), this protein is Zinc finger CCCH domain-containing protein 40.